Reading from the N-terminus, the 89-residue chain is Cytochrome c6 (89 aa).

Cys15, Cys18, His19, and Met61 together coordinate heme c.

Belongs to the cytochrome c family. PetJ subfamily. Monomer. In terms of processing, binds 1 heme c group covalently per subunit.

It is found in the plastid. It localises to the chloroplast thylakoid lumen. In terms of biological role, functions as an electron carrier between membrane-bound cytochrome b6-f and photosystem I in oxygenic photosynthesis. This is Cytochrome c6 (petJ) from Tetradesmus obliquus (Green alga).